A 337-amino-acid chain; its full sequence is 25S rRNA (adenine(2142)-N(1))-methyltransferase (337 aa).

S-adenosyl-L-methionine is bound by residues Gly180 and Asp201.

Belongs to the BMT2 family.

The protein resides in the nucleus. It localises to the nucleolus. The catalysed reaction is adenosine(2142) in 25S rRNA + S-adenosyl-L-methionine = N(1)-methyladenosine(2142) in 25S rRNA + S-adenosyl-L-homocysteine + H(+). Its function is as follows. S-adenosyl-L-methionine-dependent methyltransferase that specifically methylates the N(1) position of adenine 2142 in 25S rRNA. N(1)-methyladenine(2142) in 25S rRNA is present in helix 65, a region that accounts for most of the intersubunit surface of the large subunit. This chain is 25S rRNA (adenine(2142)-N(1))-methyltransferase, found in Saccharomyces cerevisiae (strain ATCC 204508 / S288c) (Baker's yeast).